We begin with the raw amino-acid sequence, 87 residues long: Small ribosomal subunit protein bS20 (87 aa).

The interval 1 to 28 (MANSAQARKRARQASAQRDHNMSQRSEL) is disordered. Residues 17-28 (QRDHNMSQRSEL) show a composition bias toward basic and acidic residues.

Belongs to the bacterial ribosomal protein bS20 family.

Binds directly to 16S ribosomal RNA. This chain is Small ribosomal subunit protein bS20, found in Thiobacillus denitrificans (strain ATCC 25259 / T1).